The following is a 396-amino-acid chain: S-adenosylmethionine synthase 3 (396 aa).

Residue Glu13 participates in Mg(2+) binding. Residue His19 coordinates ATP. Residue Glu47 participates in K(+) binding. Residues Glu60 and Gln103 each coordinate L-methionine. ATP contacts are provided by residues 171–173, 239–242, Asp250, 256–257, Ala273, Lys277, and Lys281; these read DGK, SGRF, and RK. Asp250 provides a ligand contact to L-methionine. An L-methionine-binding site is contributed by Lys281.

The protein belongs to the AdoMet synthase family. Homotetramer. Mn(2+) serves as cofactor. The cofactor is Mg(2+). It depends on Co(2+) as a cofactor. K(+) is required as a cofactor. In terms of tissue distribution, expressed in roots, stems and leaves (at protein level).

It localises to the cytoplasm. It carries out the reaction L-methionine + ATP + H2O = S-adenosyl-L-methionine + phosphate + diphosphate. It participates in amino-acid biosynthesis; S-adenosyl-L-methionine biosynthesis; S-adenosyl-L-methionine from L-methionine: step 1/1. Its function is as follows. Catalyzes the formation of S-adenosylmethionine from methionine and ATP. The reaction comprises two steps that are both catalyzed by the same enzyme: formation of S-adenosylmethionine (AdoMet) and triphosphate, and subsequent hydrolysis of the triphosphate. May be involved in the synthesis of betain in response to abiotic stress such as high salinity. The polypeptide is S-adenosylmethionine synthase 3 (SAMS3) (Atriplex nummularia (Old man saltbush)).